The following is a 358-amino-acid chain: Cyclin-dependent kinase 11 (358 aa).

The 285-residue stretch at 52–336 folds into the Protein kinase domain; the sequence is FKKLYTINEG…ASDALKHPYF (285 aa). Residues 58 to 66 and lysine 81 contribute to the ATP site; that span reads INEGAFGVV. The active-site Proton acceptor is aspartate 176.

Belongs to the protein kinase superfamily. CMGC Ser/Thr protein kinase family. CDC2/CDKX subfamily.

The enzyme catalyses L-seryl-[protein] + ATP = O-phospho-L-seryl-[protein] + ADP + H(+). It catalyses the reaction L-threonyl-[protein] + ATP = O-phospho-L-threonyl-[protein] + ADP + H(+). This is Cyclin-dependent kinase 11 (cdk11) from Dictyostelium discoideum (Social amoeba).